The following is a 365-amino-acid chain: Tetraacyldisaccharide 4'-kinase (365 aa).

68 to 75 provides a ligand contact to ATP; the sequence is VVGGAGKT.

This sequence belongs to the LpxK family.

It catalyses the reaction a lipid A disaccharide + ATP = a lipid IVA + ADP + H(+). The protein operates within glycolipid biosynthesis; lipid IV(A) biosynthesis; lipid IV(A) from (3R)-3-hydroxytetradecanoyl-[acyl-carrier-protein] and UDP-N-acetyl-alpha-D-glucosamine: step 6/6. In terms of biological role, transfers the gamma-phosphate of ATP to the 4'-position of a tetraacyldisaccharide 1-phosphate intermediate (termed DS-1-P) to form tetraacyldisaccharide 1,4'-bis-phosphate (lipid IVA). The polypeptide is Tetraacyldisaccharide 4'-kinase (Chlamydia pneumoniae (Chlamydophila pneumoniae)).